The primary structure comprises 172 residues: MVWCLADLRAYVLVLLVISGLYQGSDQLIPEKCGEDCTPGWDCHFNSYYKYIPNAKSWTDAEFYCQKLYPGAHLASIHSEDENDFLTEITFKNNSNYPVVWVGGSDCYKDRSFVWTDGSQWDYQKWRQWEPSNTGGREPCIDFNFVTPGLWNDEHCDQKFPFICKYTTPCRY.

Residues 1 to 20 (MVWCLADLRAYVLVLLVISG) form the signal peptide. Residues 36 to 172 (DCTPGWDCHF…ICKYTTPCRY (137 aa)) form the C-type lectin domain. 2 disulfides stabilise this stretch: cysteine 65–cysteine 164 and cysteine 140–cysteine 156. An N-linked (GlcNAc...) asparagine glycan is attached at asparagine 93.

In terms of assembly, heterodimer. In terms of tissue distribution, anterior part of oviduct.

The protein resides in the secreted. Its function is as follows. May be involved in protection of eggs and embryos against microorganisms. Calcium-dependent lectin with specificity to D-glucose and D-glucosamine. Can agglutinate microorganisms in vivo. This Pleurodeles waltl (Iberian ribbed newt) protein is Lectin (LEC).